The sequence spans 576 residues: V-type ATP synthase alpha chain (576 aa).

An ATP-binding site is contributed by G238–T245.

It belongs to the ATPase alpha/beta chains family.

It catalyses the reaction ATP + H2O + 4 H(+)(in) = ADP + phosphate + 5 H(+)(out). Its function is as follows. Produces ATP from ADP in the presence of a proton gradient across the membrane. The V-type alpha chain is a catalytic subunit. This chain is V-type ATP synthase alpha chain, found in Borrelia duttonii (strain Ly).